Reading from the N-terminus, the 644-residue chain is G-protein coupled receptor-associated protein LMBRD2 (644 aa).

Topologically, residues 1 to 4 (MGTV) are extracellular. A helical membrane pass occupies residues 5–27 (SLAVQLFIVFLLTSYLLNKYSTI). At 28 to 31 (RKQN) the chain is on the cytoplasmic side. Residues 32 to 52 (PIVTISTFIGWYFSLIIVFVL) form a helical membrane-spanning segment. Residues 53–102 (PLDVAITFFHKCENDRQRVLNTTSTPAPIVPECELPGGYVPDDVLFDLWR) lie on the Extracellular side of the membrane. A glycan (N-linked (GlcNAc...) asparagine) is linked at asparagine 73. A helical transmembrane segment spans residues 103–123 (VVYWSAQILTWLILPLLQSYV). Topologically, residues 124–145 (TAGNFTIFGKIRAAVINNTVYY) are cytoplasmic. Residues 146 to 166 (AIYSLCFLAILIYAMFKGVSI) traverse the membrane as a helical segment. Residues 167–172 (NIENLK) are Extracellular-facing. A helical transmembrane segment spans residues 173-193 (VILVSASNTWGLFLLVVLLGH). Residues 194–369 (GLVELPRSLW…RLQTPFCRVL (176 aa)) are Cytoplasmic-facing. A coiled-coil region spans residues 216 to 245 (YFDIEKLASEKSEAEENVKEIYKKVRVLFN). A helical membrane pass occupies residues 370-390 (GVVTVFMTFFVLFSECTFFVV). Residues 391 to 412 (SYTVSPAAFVTEYASNRFHYKY) lie on the Extracellular side of the membrane. A helical transmembrane segment spans residues 413 to 433 (TQFVAFGIIVYLITCAYFTIF). At 434–453 (RLQIYKYYHLDPNGHTDENS) the chain is on the cytoplasmic side. A helical transmembrane segment spans residues 454–474 (ILFSAILLCRLTPPICLNFLG). The Extracellular segment spans residues 475–502 (MIHMDSHVSMAKSFGVETQFTKLMGHLD). The helical transmembrane segment at 503 to 523 (VIPILAKGINIYLPICIILLC) threads the bilayer. Residues 524 to 644 (AIHYYRVGAY…PSSSGFFDDM (121 aa)) lie on the Cytoplasmic side of the membrane. Positions 567-576 (SIKRSNERNQ) are enriched in basic and acidic residues. The tract at residues 567–644 (SIKRSNERNQ…PSSSGFFDDM (78 aa)) is disordered. Residues 578–594 (NQSWTNTITSNTSTTSN) are compositionally biased toward low complexity. A compositionally biased stretch (polar residues) spans 621-644 (VSSTTRISLSPTEHPSSSGFFDDM).

This sequence belongs to the LIMR family.

Its subcellular location is the cell membrane. May associate with G-protein coupled receptors and regulate downstream signaling pathways. This is G-protein coupled receptor-associated protein LMBRD2 from Caenorhabditis briggsae.